We begin with the raw amino-acid sequence, 456 residues long: Exodeoxyribonuclease 7 large subunit (456 aa).

The segment at 1 to 103 (MLPSQSPAIF…DYQIIVESMQ (103 aa)) is binds ssDNA, also required to bind the small subunit.

It belongs to the XseA family. As to quaternary structure, heterooligomer composed of two different subunits with an approximate ratio of 4:1 for small to large subunit. Also estimated to have a 6:1 ration for small to large subunits. The cofactor is Does not require a metal cofactor..

The protein resides in the cytoplasm. The catalysed reaction is Exonucleolytic cleavage in either 5'- to 3'- or 3'- to 5'-direction to yield nucleoside 5'-phosphates.. Its function is as follows. Bidirectionally degrades single-stranded DNA into large acid-insoluble oligonucleotides, which are then degraded further into small acid-soluble oligonucleotides. It can degrade 3' or 5' ss regions extending from the termini of duplex DNA molecules and displaced ss regions. It can also excise thymine dimers in vitro. ssDNA-binding requires both subunits. Required for production of the mature 5'-end of retron Ec78 or Ec83 msDNA. Overproduction of this subunit in the absence of an equivalent quantity of the small subunit is toxic, causing cell elongation and chromosome fragmentation or loss; its toxicity is mostly suppressed by RecA. The sequence is that of Exodeoxyribonuclease 7 large subunit from Escherichia coli (strain K12).